The following is a 236-amino-acid chain: Small ribosomal subunit protein uS10m (236 aa).

The transit peptide at Met-1–Gln-24 directs the protein to the mitochondrion. Positions Lys-29–Phe-49 are disordered. Positions Glu-39 to Phe-49 are enriched in basic and acidic residues.

This sequence belongs to the universal ribosomal protein uS10 family. In terms of assembly, part of the mitochondrial small ribosomal subunit.

The protein resides in the mitochondrion. In terms of biological role, involved in mitochondrial genome encoded proteins translation. Involved in the binding of tRNA to the ribosomes. The sequence is that of Small ribosomal subunit protein uS10m (RSM10) from Gibberella zeae (strain ATCC MYA-4620 / CBS 123657 / FGSC 9075 / NRRL 31084 / PH-1) (Wheat head blight fungus).